We begin with the raw amino-acid sequence, 375 residues long: Trichodiene synthase (375 aa).

It belongs to the trichodiene synthase family.

The enzyme catalyses (2E,6E)-farnesyl diphosphate = trichodiene + diphosphate. Its pathway is sesquiterpene biosynthesis; trichothecene biosynthesis. In terms of biological role, TS is a member of the terpene cyclase group of enzymes. It catalyzes the isomerization and cyclization of farnesyl pyro-phosphate to form trichodiene, the first cyclic intermediate in the biosynthetic pathway for trichothecenes. It serves to branch trichothecene biosynthesis from the isoprenoid pathway. The protein is Trichodiene synthase (TRI5) of Fusarium cerealis (Fusarium crookwellense).